The sequence spans 110 residues: UPF0122 protein BcerKBAB4_3669 (110 aa).

It belongs to the UPF0122 family.

Functionally, might take part in the signal recognition particle (SRP) pathway. This is inferred from the conservation of its genetic proximity to ftsY/ffh. May be a regulatory protein. This chain is UPF0122 protein BcerKBAB4_3669, found in Bacillus mycoides (strain KBAB4) (Bacillus weihenstephanensis).